The following is a 199-amino-acid chain: Ribonuclease P protein subunit p25 (199 aa).

Residues 1-11 (MENFRKVRSEE) are compositionally biased toward basic and acidic residues. Disordered stretches follow at residues 1 to 31 (MENFRKVRSEEAPAGDGDEGGSPSSGPFADL) and 146 to 199 (PRQL…DRTA). Ser-172 carries the post-translational modification Phosphoserine. Residues 190 to 199 (PEAENEDRTA) are compositionally biased toward acidic residues.

This sequence belongs to the histone-like Alba family. As to quaternary structure, component of nuclear RNase P and RNase MRP ribonucleoproteins. RNase P consists of a catalytic RNA moiety and 10 different protein chains; POP1, POP4, POP5, POP7, RPP14, RPP21, RPP25, RPP30, RPP38 and RPP40. Within the RNase P complex, POP1, POP7 and RPP25 form the 'finger' subcomplex, POP5, RPP14, RPP40 and homodimeric RPP30 form the 'palm' subcomplex, and RPP21, POP4 and RPP38 form the 'wrist' subcomplex. All subunits of the RNase P complex interact with the catalytic RNA. Several subunits of RNase P are also part of the RNase MRP complex. RNase MRP consists of a catalytic RNA moiety and about 8 protein subunits; POP1, POP7, RPP25, RPP30, RPP38, RPP40 and possibly also POP4 and POP5. POP7 forms a heterodimer with RPP25 that binds to the P3 stem loop of the catalytic RNA.

It localises to the nucleus. The protein localises to the nucleolus. Functionally, component of ribonuclease P, a ribonucleoprotein complex that generates mature tRNA molecules by cleaving their 5'-ends. Also a component of the MRP ribonuclease complex, which cleaves pre-rRNA sequences. The chain is Ribonuclease P protein subunit p25 (Rpp25) from Rattus norvegicus (Rat).